The sequence spans 150 residues: Myosin, essential light chain (150 aa).

EF-hand domains are found at residues 3–38 and 75–110; these read ASAD…LGKS and EQQK…LGDY. Ca(2+)-binding residues include Asp16, Asp18, Asp20, Lys22, and Asp27.

Myosin is a hexamer of 2 heavy chains and 4 light chains (two regulatory light chains and two essential light chains).

This Dictyostelium discoideum (Social amoeba) protein is Myosin, essential light chain (mlcE).